A 354-amino-acid chain; its full sequence is Uroporphyrinogen decarboxylase (354 aa).

Substrate is bound by residues 27–31 (RQAGR), Asp77, Tyr154, Thr209, and His327.

The protein belongs to the uroporphyrinogen decarboxylase family. In terms of assembly, homodimer.

Its subcellular location is the cytoplasm. The catalysed reaction is uroporphyrinogen III + 4 H(+) = coproporphyrinogen III + 4 CO2. It participates in porphyrin-containing compound metabolism; protoporphyrin-IX biosynthesis; coproporphyrinogen-III from 5-aminolevulinate: step 4/4. Catalyzes the decarboxylation of four acetate groups of uroporphyrinogen-III to yield coproporphyrinogen-III. In Psychromonas ingrahamii (strain DSM 17664 / CCUG 51855 / 37), this protein is Uroporphyrinogen decarboxylase.